Here is a 495-residue protein sequence, read N- to C-terminus: Glucose-6-phosphate 1-dehydrogenase (495 aa).

An Isoglutamyl lysine isopeptide (Lys-Gln) (interchain with Q-Cter in protein Pup) cross-link involves residue Lys-51. NADP(+) contacts are provided by residues 94 to 95 (DL) and Lys-154. Residues His-184, Lys-188, Glu-222, and Asp-241 each coordinate substrate. His-246 serves as the catalytic Proton acceptor. Residue Lys-345 coordinates substrate.

The protein belongs to the glucose-6-phosphate dehydrogenase family.

It carries out the reaction D-glucose 6-phosphate + NADP(+) = 6-phospho-D-glucono-1,5-lactone + NADPH + H(+). The protein operates within carbohydrate degradation; pentose phosphate pathway; D-ribulose 5-phosphate from D-glucose 6-phosphate (oxidative stage): step 1/3. Its function is as follows. Catalyzes the oxidation of glucose 6-phosphate to 6-phosphogluconolactone. This chain is Glucose-6-phosphate 1-dehydrogenase, found in Mycolicibacterium smegmatis (strain ATCC 700084 / mc(2)155) (Mycobacterium smegmatis).